Consider the following 4538-residue polypeptide: Polyketide synthase PksL (4538 aa).

Residues 1–123 (MRWRSNVKKI…ADMHADSPAI (123 aa)) form an N-terminal hotdog fold 1 region. The PKS/mFAS DH 1 domain occupies 1–285 (MRWRSNVKKI…SKLVREAELI (285 aa)). H26 serves as the catalytic Proton acceptor; for dehydratase activity 1. Positions 138 to 285 (QNVVQLDDVY…SKLVREAELI (148 aa)) are C-terminal hotdog fold 1. D199 (proton donor; for dehydratase activity 1) is an active-site residue. The segment at 289 to 314 (HQDAQETQMTRADTAERDKPADMVSS) is disordered. The 75-residue stretch at 320-394 (SEAEQFVSQL…ELSAFLAEEY (75 aa)) folds into the Carrier 1 domain. S354 carries the post-translational modification O-(pantetheine 4'-phosphoryl)serine. In terms of domain architecture, Ketosynthase family 3 (KS3) 1 spans 433–871 (AGDIAIIGLA…GSNAHIILEE (439 aa)). Active-site for beta-ketoacyl synthase 1 activity residues include C609, H744, and H784. Residues 1048–1226 (HILHPLLHQN…DSLYAGENGV (179 aa)) form a dehydratase region. Residues 1051 to 1175 (HPLLHQNVSD…GSAVLCEAGE (125 aa)) form an N-terminal hotdog fold 2 region. A PKS/mFAS DH 2 domain is found at 1051 to 1340 (HPLLHQNVSD…ARVLETDQEG (290 aa)). Catalysis depends on H1080, which acts as the Proton acceptor; for dehydratase activity 2. The tract at residues 1189–1340 (NGRTLSPFDC…ARVLETDQEG (152 aa)) is C-terminal hotdog fold 2. D1251 (proton donor; for dehydratase activity 2) is an active-site residue. A beta-ketoacyl reductase 1 region spans residues 1520 to 1713 (KGVYLITGGA…WKDGGMQIDA (194 aa)). The region spanning 1800–1873 (EKAENYFKQV…SLTRYFIDSR (74 aa)) is the Carrier 2 domain. Residue S1834 is modified to O-(pantetheine 4'-phosphoryl)serine. The region spanning 1926-2365 (TEEIAIIGIS…GVNAHILIEE (440 aa)) is the Ketosynthase family 3 (KS3) 2 domain. Residues C2103, H2238, and H2278 each act as for beta-ketoacyl synthase 2 activity in the active site. Residues 2546 to 2568 (TEEPFAPVQPVIPKPSVDREASG) are disordered. 2 consecutive Carrier domains span residues 2597 to 2674 (ITAE…AHEL) and 2738 to 2815 (VAIE…KSEL). An O-(pantetheine 4'-phosphoryl)serine mark is found at S2634 and S2775. Residues 2828 to 2854 (SFEAAQQKPAASSHPKPAERPLQPVQH) form a disordered region. A Ketosynthase family 3 (KS3) 3 domain is found at 2873-3294 (EDAIAIVGMS…GTNAHIVIEE (422 aa)). Residues C3040, H3175, and H3215 each act as for beta-ketoacyl synthase 3 activity in the active site. Positions 3686–3887 (DKVLLITGGT…PNWKETGLGE (202 aa)) are beta-ketoacyl reductase 2. The Carrier 5 domain maps to 3960–4037 (NLFPETVDWL…SFAHWLISKY (78 aa)). S3997 is modified (O-(pantetheine 4'-phosphoryl)serine). Positions 4082–4485 (AEDIAIIGLS…GTNAHLIIEG (404 aa)) constitute a Ketosynthase family 3 (KS3) 4 domain. Catalysis depends on C4237, which acts as the For beta-ketoacyl synthase 4 activity.

Pantetheine 4'-phosphate is required as a cofactor.

It localises to the cytoplasm. Its pathway is antibiotic biosynthesis; bacillaene biosynthesis. Involved in some intermediate steps for the synthesis of the antibiotic polyketide bacillaene which is involved in secondary metabolism. The polypeptide is Polyketide synthase PksL (pksL) (Bacillus subtilis (strain 168)).